The sequence spans 216 residues: UPF0301 protein BBta_6966 (216 aa).

It belongs to the UPF0301 (AlgH) family.

The sequence is that of UPF0301 protein BBta_6966 from Bradyrhizobium sp. (strain BTAi1 / ATCC BAA-1182).